The sequence spans 278 residues: MRVALGVSYNGSAYRGWQSQPGGATVQDRLEAALARFATHEVSTICAGRTDAGVHGLMQVVHFDTPLERTPFSWVRGTNTFLPPDIAVQWARPVPEAFHSRASATARRYAYVLLQSPVRPSVEAGRVGWVFHALDGDAMRAAARHLLGEHDFTSFRASACQAKSPVKTLRRIEITQRGTGGVPAGQAPGDRGDVPTCYWRFEFEGNAFLHHMVRNIMGCLVAVGQGQHPADWMHAVLQARSRDAAAPTFSPDGLYFLGPLYDPAWGLPDRTAAYDWLP.

Asp51 serves as the catalytic Nucleophile. Tyr109 provides a ligand contact to substrate.

This sequence belongs to the tRNA pseudouridine synthase TruA family. As to quaternary structure, homodimer.

It carries out the reaction uridine(38/39/40) in tRNA = pseudouridine(38/39/40) in tRNA. In terms of biological role, formation of pseudouridine at positions 38, 39 and 40 in the anticodon stem and loop of transfer RNAs. In Paracidovorax citrulli (strain AAC00-1) (Acidovorax citrulli), this protein is tRNA pseudouridine synthase A.